Here is a 367-residue protein sequence, read N- to C-terminus: Alanine racemase (367 aa).

Residue Lys-34 is the Proton acceptor; specific for D-alanine of the active site. At Lys-34 the chain carries N6-(pyridoxal phosphate)lysine. Substrate is bound at residue Arg-129. Tyr-251 functions as the Proton acceptor; specific for L-alanine in the catalytic mechanism. Met-299 contacts substrate.

The protein belongs to the alanine racemase family. Pyridoxal 5'-phosphate serves as cofactor.

It carries out the reaction L-alanine = D-alanine. Its pathway is amino-acid biosynthesis; D-alanine biosynthesis; D-alanine from L-alanine: step 1/1. Its function is as follows. Catalyzes the interconversion of L-alanine and D-alanine. May also act on other amino acids. The protein is Alanine racemase (alr) of Thiobacillus denitrificans (strain ATCC 25259 / T1).